A 396-amino-acid chain; its full sequence is FAD-dependent monooxygenase phomE' (396 aa).

Glu-3 serves as a coordination point for FAD. Residues Arg-158 and Tyr-196 contribute to the active site. FAD-binding residues include Asp-277 and Gly-290.

Belongs to the paxM FAD-dependent monooxygenase family. As to quaternary structure, monomer. It depends on FAD as a cofactor.

Its function is as follows. FAD-dependent monooxygenase; part of the gene cluster that mediates the biosynthesis of the phomopsins, a group of hexapeptide mycotoxins which infects lupins and causes lupinosis disease in livestock. The role of phomE' within the phomopsins biosynthesis pathway has still to be determined. The pathway starts with the processing of the precursor phomA by several endopeptidases including kexin proteases as well as the cluster-specific S41 family peptidase phomP1 and the oligopeptidase phomG to produce 10 identical copies of the hexapeptide Tyr-Val-Ile-Pro-Ile-Asp. After being excised from the precursor peptide, the core peptides are cyclized and modified post-translationally by enzymes encoded within the gene cluster. The timing and order of proteolysis of the phomA precursor and PTMs are still unknown. Two tyrosinase-like enzymes, phomQ1 and phomQ2, catalyze the chlorination and hydroxylation of Tyr, respectively. PhomYb, is proposed to be involved in the construction of the macrocyclic structure. The other 4 ustYa family proteins may be involved in PTMs that generate the unique structure of phomopsin A. PhomYa is required for the hydroxylation of C-beta of Tyr. PhomYc, phomYd, and phomYe are responsible for the biosynthesis of 2,3-dehydroisoleucine (dIle), 2,3-dehydroaspartic acid (dAsp), and 3,4-dehydroproline (dPro), respectively. While dIle formation by phomYc is indispensable for the installation of dAsp by phomYd, the order of the other PTMs have not been elucidated yet. Most of the biosynthetic enzymes likely have broad substrate specificity, and thus, there might be a metabolic grid from a precursor to phomopsin A. The enzyme(s) responsible for the biosynthesis of 3,4-dehydrovaline (dVal) have also not been identified yet. Finally, phomM acts as an S-adenosylmethionine-dependent alpha-N-methyltransferase that catalyzes two successive N-methylation reactions, converting N-desmethyl-phomopsin A to phomopsin A and phomopsin A further to an N,N-dimethylated congener called phomopsin E. This is FAD-dependent monooxygenase phomE' from Diaporthe leptostromiformis (Lupinosis disease fungus).